A 165-amino-acid chain; its full sequence is Acireductone dioxygenase (165 aa).

His-90, His-92, Glu-96, and His-134 together coordinate Fe(2+). The Ni(2+) site is built by His-90, His-92, Glu-96, and His-134.

Belongs to the acireductone dioxygenase (ARD) family. Monomer. Fe(2+) is required as a cofactor. Requires Ni(2+) as cofactor.

It carries out the reaction 1,2-dihydroxy-5-(methylsulfanyl)pent-1-en-3-one + O2 = 3-(methylsulfanyl)propanoate + CO + formate + 2 H(+). The catalysed reaction is 1,2-dihydroxy-5-(methylsulfanyl)pent-1-en-3-one + O2 = 4-methylsulfanyl-2-oxobutanoate + formate + 2 H(+). It participates in amino-acid biosynthesis; L-methionine biosynthesis via salvage pathway; L-methionine from S-methyl-5-thio-alpha-D-ribose 1-phosphate: step 5/6. In terms of biological role, catalyzes 2 different reactions between oxygen and the acireductone 1,2-dihydroxy-3-keto-5-methylthiopentene (DHK-MTPene) depending upon the metal bound in the active site. Fe-containing acireductone dioxygenase (Fe-ARD) produces formate and 2-keto-4-methylthiobutyrate (KMTB), the alpha-ketoacid precursor of methionine in the methionine recycle pathway. Ni-containing acireductone dioxygenase (Ni-ARD) produces methylthiopropionate, carbon monoxide and formate, and does not lie on the methionine recycle pathway. This Rhodopseudomonas palustris (strain ATCC BAA-98 / CGA009) protein is Acireductone dioxygenase.